The primary structure comprises 241 residues: Uridylate kinase (241 aa).

15–18 (KLSG) is a binding site for ATP. Residues 23 to 28 (GAEGFG) form an involved in allosteric activation by GTP region. G57 contacts UMP. Positions 58 and 62 each coordinate ATP. UMP is bound by residues D77 and 138 to 145 (TGNPFFTT). ATP-binding residues include T165, Y171, and D174.

Belongs to the UMP kinase family. In terms of assembly, homohexamer.

It is found in the cytoplasm. It catalyses the reaction UMP + ATP = UDP + ADP. Its pathway is pyrimidine metabolism; CTP biosynthesis via de novo pathway; UDP from UMP (UMPK route): step 1/1. With respect to regulation, allosterically activated by GTP. Inhibited by UTP. Its function is as follows. Catalyzes the reversible phosphorylation of UMP to UDP. This chain is Uridylate kinase, found in Serratia proteamaculans (strain 568).